The chain runs to 365 residues: GTPase Obg (365 aa).

Residues 1 to 159 enclose the Obg domain; the sequence is MKFIDEARIE…RMLKLELKVL (159 aa). Residues 160–334 enclose the OBG-type G domain; it reads ADVGLLGMPN…LIYAIKDHLQ (175 aa). GTP is bound by residues 166-173, 191-195, 213-216, 284-287, and 315-317; these read GMPNAGKS, FTTLH, DIPG, NKLD, and SAL. Residues Ser173 and Thr193 each contribute to the Mg(2+) site.

The protein belongs to the TRAFAC class OBG-HflX-like GTPase superfamily. OBG GTPase family. Monomer. It depends on Mg(2+) as a cofactor.

The protein resides in the cytoplasm. An essential GTPase which binds GTP, GDP and possibly (p)ppGpp with moderate affinity, with high nucleotide exchange rates and a fairly low GTP hydrolysis rate. Plays a role in control of the cell cycle, stress response, ribosome biogenesis and in those bacteria that undergo differentiation, in morphogenesis control. The polypeptide is GTPase Obg (Cupriavidus necator (strain ATCC 17699 / DSM 428 / KCTC 22496 / NCIMB 10442 / H16 / Stanier 337) (Ralstonia eutropha)).